A 198-amino-acid chain; its full sequence is Nucleoid occlusion factor SlmA (198 aa).

Residues 10–70 (NRREEILQSL…SLIEFIEDSL (61 aa)) enclose the HTH tetR-type domain. A DNA-binding region (H-T-H motif) is located at residues 33–52 (TTAKLAASVGVSEAALYRHF). Residues 117-145 (EQDKLQGRINQLFERIEAQLRQVLREKKM) adopt a coiled-coil conformation.

The protein belongs to the nucleoid occlusion factor SlmA family. As to quaternary structure, homodimer. Interacts with FtsZ.

It is found in the cytoplasm. The protein resides in the nucleoid. Functionally, required for nucleoid occlusion (NO) phenomenon, which prevents Z-ring formation and cell division over the nucleoid. Acts as a DNA-associated cell division inhibitor that binds simultaneously chromosomal DNA and FtsZ, and disrupts the assembly of FtsZ polymers. SlmA-DNA-binding sequences (SBS) are dispersed on non-Ter regions of the chromosome, preventing FtsZ polymerization at these regions. This Enterobacter sp. (strain 638) protein is Nucleoid occlusion factor SlmA.